The chain runs to 394 residues: MFEMYVDVDGKRLRCGYTTGSCSAGAAKAATIILFNKEKNLNEIEIATPKGIDVTMPIELIEKFDDYVECTILKDGGDDPDNTHGIEIKAMVKKIKPIDNKIFQDEDLQKFDSVLVEDSRAEKEDELERVVLKGGTGVGIVTREGLFIPKGQAAINPVPRKMIKEEVLKVLPPGERVEVIISVPQGEKVAKKTFNPRLGIVGGISILGTTGIVYPMSEDALKASIKIEITQKAINNERLVLTFGNLGDNYCKELGFKEEEVVTCSNFIGFALETCVSCKVKSIIIVGHIGKMSKIAYGCFNTHSKVNGVRLEVIALELALLGYDMSLVKRVLEEKTCEGAVKMLGDGYDKLYENIGNKIVQKIKEHVYGELEVDAVMYYGASNPILLWKSIKDN.

This sequence belongs to the CbiD family.

The enzyme catalyses Co-precorrin-5B + S-adenosyl-L-methionine = Co-precorrin-6A + S-adenosyl-L-homocysteine. It functions in the pathway cofactor biosynthesis; adenosylcobalamin biosynthesis; cob(II)yrinate a,c-diamide from sirohydrochlorin (anaerobic route): step 6/10. Catalyzes the methylation of C-1 in cobalt-precorrin-5B to form cobalt-precorrin-6A. This is Cobalt-precorrin-5B C(1)-methyltransferase from Clostridium beijerinckii (strain ATCC 51743 / NCIMB 8052) (Clostridium acetobutylicum).